Here is a 99-residue protein sequence, read N- to C-terminus: Sarcosine oxidase subunit delta (99 aa).

4 residues coordinate Zn(2+): Cys-6, Cys-9, His-59, and Cys-63.

It belongs to the SoxD family. As to quaternary structure, heterotetramer composed of subunits alpha (SoxA), beta (SoxB), gamma (SoxG) and delta (SoxD).

The protein localises to the cytoplasm. It carries out the reaction sarcosine + (6S)-5,6,7,8-tetrahydrofolate + O2 = (6R)-5,10-methylene-5,6,7,8-tetrahydrofolate + glycine + H2O2. It catalyses the reaction sarcosine + O2 + H2O = formaldehyde + glycine + H2O2. Inhibited by Zn(2+), Cu(2+), Cd(2+), Hg(2+), Ag(+), p-chloromercuribenzoate (p-CMB), iodoacetamide, N-ethylmaleimide, CN(-), o-phenanthroline and sodium lauryl sulfate. Functionally, in the presence of tetrahydrofolate, catalyzes the oxidative demethylation of sarcosine to yield glycine, 5,10-methylenetetrahydrofolate and hydrogen peroxide. In the absence of tetrahydrofolate, catalyzes the oxidative demethylation of sarcosine to yield glycine, formaldehyde and hydrogen peroxide. Can also use N-methyl-L-alanine and N-ethyl-L-glycine. Is very specific for oxygen as an acceptor. The chain is Sarcosine oxidase subunit delta from Corynebacterium sp. (strain U-96).